A 558-amino-acid polypeptide reads, in one-letter code: Laccase-10 (558 aa).

The first 22 residues, 1–22 (MVFPIRILVLFALLAFPACVHG), serve as a signal peptide directing secretion. 2 Plastocyanin-like domains span residues 30–146 (NVVT…PKLG) and 157–308 (EEVI…YSGT). The N-linked (GlcNAc...) asparagine glycan is linked to asparagine 76. Residues histidine 80 and histidine 82 each contribute to the Cu cation site. Asparagine 112 carries N-linked (GlcNAc...) asparagine glycosylation. Histidine 125 and histidine 127 together coordinate Cu cation. N-linked (GlcNAc...) asparagine glycosylation is found at asparagine 185, asparagine 296, asparagine 323, asparagine 373, asparagine 383, asparagine 400, and asparagine 441. Residues 408-542 (DFPAKPRRVF…KMAFLVENGK (135 aa)) form the Plastocyanin-like 3 domain. 7 residues coordinate Cu cation: histidine 459, histidine 462, histidine 464, histidine 521, cysteine 522, histidine 523, and histidine 527. Residue asparagine 545 is glycosylated (N-linked (GlcNAc...) asparagine).

It belongs to the multicopper oxidase family. Cu cation serves as cofactor. As to expression, ubiquitous, with lower levels in siliques.

Its subcellular location is the secreted. It localises to the extracellular space. It is found in the apoplast. The enzyme catalyses 4 hydroquinone + O2 = 4 benzosemiquinone + 2 H2O. In terms of biological role, lignin degradation and detoxification of lignin-derived products. This chain is Laccase-10 (LAC10), found in Arabidopsis thaliana (Mouse-ear cress).